A 136-amino-acid polypeptide reads, in one-letter code: MALFTAKVTARGGRAGHITSDDGVLDFDIVMPNAKKEGQTGTNPEQLFAAGYAACFGGALEHVAKEQNIEIDSEIEGQVSLMKDESDGGFKIGVTLVVNTKDLDREKAQELVNAAHEFCPYSKATRGNVDVKLELK.

It belongs to the OsmC/Ohr family.

Involved in organic hydroperoxide resistance. This is Organic hydroperoxide resistance protein OhrB (ohrB) from Bacillus subtilis (strain 168).